We begin with the raw amino-acid sequence, 271 residues long: Protein PXR1 (271 aa).

The G-patch domain occupies 25-72; sequence TSRFGHQFLEKFGWKPGMGLGLSPMNSNTSHIKVSIKDDNVGLGAKLK. Positions 147–239 are disordered; it reads SNAKKRKREG…SASNIPDAVN (93 aa). The span at 157–168 shows a compositional bias: acidic residues; it reads DDSEDEDDDDKE. The segment covering 175–203 has biased composition (basic residues); sequence KKHKKHKKHKKDKKKDKKDKKEHKKHKKE. The span at 204–221 shows a compositional bias: basic and acidic residues; the sequence is EKRLKKEKRAEKTKETKK. At serine 230 the chain carries Phosphoserine.

Belongs to the PINX1 family. As to quaternary structure, interacts with EST2.

It localises to the nucleus. It is found in the nucleolus. Its function is as follows. Involved in rRNA-processing at A0, A1 and A2 sites through its action in U18 and U24 snoRNA 3'-end final trimming. Negative regulator of telomerase through competition for binding to EST2 with TLC1. The chain is Protein PXR1 (PXR1) from Saccharomyces cerevisiae (strain ATCC 204508 / S288c) (Baker's yeast).